Consider the following 158-residue polypeptide: Ribosome maturation factor RimP (158 aa).

It belongs to the RimP family.

It localises to the cytoplasm. Its function is as follows. Required for maturation of 30S ribosomal subunits. The protein is Ribosome maturation factor RimP of Deinococcus radiodurans (strain ATCC 13939 / DSM 20539 / JCM 16871 / CCUG 27074 / LMG 4051 / NBRC 15346 / NCIMB 9279 / VKM B-1422 / R1).